A 254-amino-acid chain; its full sequence is Glutathione S-transferase U12 (254 aa).

The short motif at 19–23 is the Nuclear localization signal element; that stretch reads KKRKK. In terms of domain architecture, GST N-terminal spans 33 to 114; the sequence is TTVKLIGTWA…YVDESWPSDL (82 aa). Glutathione contacts are provided by residues 43-44, 71-72, 85-86, and 98-99; these read SP, GK, KV, and ES. Residues 120–252 enclose the GST C-terminal domain; it reads LPSERAFARF…EFIEFAKKKF (133 aa).

The protein belongs to the GST superfamily. Tau family.

It localises to the nucleus. It catalyses the reaction RX + glutathione = an S-substituted glutathione + a halide anion + H(+). In terms of biological role, may be involved in the conjugation of reduced glutathione to a wide number of exogenous and endogenous hydrophobic electrophiles and have a detoxification role against certain herbicides. This is Glutathione S-transferase U12 (GSTU12) from Arabidopsis thaliana (Mouse-ear cress).